The following is a 108-amino-acid chain: Large ribosomal subunit protein P2A (108 aa).

Positions 62–108 are disordered; the sequence is LSSVPSGAPAAAAGGASAAAGGEATEEAAEEEAAEESDDDMSFGLFD. The span at 68–84 shows a compositional bias: low complexity; it reads GAPAAAAGGASAAAGGE. Residues 85-102 are compositionally biased toward acidic residues; that stretch reads ATEEAAEEEAAEESDDDM. Position 98 is a phosphoserine (Ser-98).

This sequence belongs to the eukaryotic ribosomal protein P1/P2 family.

Functionally, plays an important role in the elongation step of protein synthesis. The sequence is that of Large ribosomal subunit protein P2A (RPP2A) from Candida albicans (Yeast).